The following is a 755-amino-acid chain: 1,4-alpha-glucan branching enzyme GlgB (755 aa).

The Nucleophile role is filled by aspartate 431. Catalysis depends on glutamate 484, which acts as the Proton donor.

This sequence belongs to the glycosyl hydrolase 13 family. GlgB subfamily. Monomer.

The enzyme catalyses Transfers a segment of a (1-&gt;4)-alpha-D-glucan chain to a primary hydroxy group in a similar glucan chain.. The protein operates within glycan biosynthesis; glycogen biosynthesis. Functionally, catalyzes the formation of the alpha-1,6-glucosidic linkages in glycogen by scission of a 1,4-alpha-linked oligosaccharide from growing alpha-1,4-glucan chains and the subsequent attachment of the oligosaccharide to the alpha-1,6 position. This Prochlorococcus marinus (strain NATL1A) protein is 1,4-alpha-glucan branching enzyme GlgB.